A 306-amino-acid chain; its full sequence is Ornithine carbamoyltransferase (306 aa).

Carbamoyl phosphate contacts are provided by residues 53-56 (STRT), Gln-80, Arg-104, and 131-134 (HPCQ). L-ornithine contacts are provided by residues Asn-162, Asp-219, and 223 to 224 (SM). Residues 259 to 260 (CL) and Arg-287 contribute to the carbamoyl phosphate site.

The protein belongs to the aspartate/ornithine carbamoyltransferase superfamily. OTCase family.

It is found in the cytoplasm. It catalyses the reaction carbamoyl phosphate + L-ornithine = L-citrulline + phosphate + H(+). The protein operates within amino-acid biosynthesis; L-arginine biosynthesis; L-arginine from L-ornithine and carbamoyl phosphate: step 1/3. Reversibly catalyzes the transfer of the carbamoyl group from carbamoyl phosphate (CP) to the N(epsilon) atom of ornithine (ORN) to produce L-citrulline. This is Ornithine carbamoyltransferase from Pseudomonas syringae pv. tomato (strain ATCC BAA-871 / DC3000).